A 618-amino-acid chain; its full sequence is D-glucuronyl C5-epimerase (618 aa).

The Cytoplasmic segment spans residues 1 to 11 (MRCLAARVNYK). A helical; Signal-anchor for type II membrane protein transmembrane segment spans residues 12 to 29 (TLIIICALFTLVTVLLWN). The Lumenal portion of the chain corresponds to 30–618 (KCSSDKAIQF…YLKGSRAKHN (589 aa)). Substrate-binding positions include Y180, 185-187 (RDR), Q202, Y210, Q213, and Q216. Residues T238, E240, T269, N270, and D393 each contribute to the Ca(2+) site. Residues 430–433 (KLGE), 500–501 (EY), N511, Y515, Y561, R564, and 573–582 (NLARWDYHTT) each bind substrate.

It belongs to the D-glucuronyl C5-epimerase family. In terms of assembly, homodimer. Interacts with HS2ST1. Widely expressed with highest levels in lung and lowest levels in spleen.

The protein localises to the golgi apparatus membrane. It carries out the reaction [heparosan-N-sulfate](n) = [heparan-N-sulfate](n). It functions in the pathway glycan metabolism; heparan sulfate biosynthesis. The protein operates within glycan metabolism; heparin biosynthesis. Converts D-glucuronic acid residues adjacent to N-sulfate sugar residues to L-iduronic acid residues, both in maturing heparan sulfate (HS) and heparin chains. This is important for further modifications that determine the specificity of interactions between these glycosaminoglycans and proteins. The protein is D-glucuronyl C5-epimerase (Glce) of Mus musculus (Mouse).